The primary structure comprises 327 residues: Ferrochelatase (327 aa).

2 residues coordinate Fe cation: His-196 and Glu-277.

It belongs to the ferrochelatase family.

The protein localises to the cytoplasm. It catalyses the reaction heme b + 2 H(+) = protoporphyrin IX + Fe(2+). It functions in the pathway porphyrin-containing compound metabolism; protoheme biosynthesis; protoheme from protoporphyrin-IX: step 1/1. Its function is as follows. Catalyzes the ferrous insertion into protoporphyrin IX. This chain is Ferrochelatase, found in Gloeobacter violaceus (strain ATCC 29082 / PCC 7421).